We begin with the raw amino-acid sequence, 179 residues long: Large ribosomal subunit protein uL5 (179 aa).

This sequence belongs to the universal ribosomal protein uL5 family. Part of the 50S ribosomal subunit; part of the 5S rRNA/L5/L18/L25 subcomplex. Contacts the 5S rRNA and the P site tRNA. Forms a bridge to the 30S subunit in the 70S ribosome.

Its function is as follows. This is one of the proteins that bind and probably mediate the attachment of the 5S RNA into the large ribosomal subunit, where it forms part of the central protuberance. In the 70S ribosome it contacts protein S13 of the 30S subunit (bridge B1b), connecting the 2 subunits; this bridge is implicated in subunit movement. Contacts the P site tRNA; the 5S rRNA and some of its associated proteins might help stabilize positioning of ribosome-bound tRNAs. The polypeptide is Large ribosomal subunit protein uL5 (Pseudomonas syringae pv. tomato (strain ATCC BAA-871 / DC3000)).